A 739-amino-acid chain; its full sequence is Potassium transporter 26 (739 aa).

Residues 1 to 81 are Cytoplasmic-facing; that stretch reads MEYHHRPHSP…RQVALLSFQS (81 aa). The chain crosses the membrane as a helical span at residues 82 to 102; that stretch reads LGVVYGDLGTSPLYVFSSISL. The Extracellular portion of the chain corresponds to 103-112; the sequence is DDPGEADFVG. Residues 113–133 traverse the membrane as a helical segment; that stretch reads ILSIILWTFTMICLVKYVFIV. At 134 to 198 the chain is on the cytoplasmic side; that stretch reads LKADDHGEGG…KFLEQSTKWQ (65 aa). Residues 199 to 219 traverse the membrane as a helical segment; sequence AVITYIVLAGTCMVLGDGALT. The Extracellular segment spans residues 220–236; sequence PAISVLSAVQGIQSRSS. A helical transmembrane segment spans residues 237–257; the sequence is SITQAHVVLLSVIILFILFFF. Topologically, residues 258 to 268 are cytoplasmic; sequence QKHGTSKVSFT. The chain crosses the membrane as a helical span at residues 269-289; the sequence is FSPIMILWFTFVAFIGLYNII. Residues 290-318 lie on the Extracellular side of the membrane; it reads KHYPPILKAVSPHYIIIYFIRNKRAAWET. A helical transmembrane segment spans residues 319–339; it reads LGAIVLCITGAEAMFADLGHF. Residues 340 to 347 are Cytoplasmic-facing; it reads NKSSIQMA. A helical membrane pass occupies residues 348–368; it reads FSVIVYPSMILAYAGQAAFLV. The Extracellular segment spans residues 369 to 385; that stretch reads KNPSKLSTTFYSSTPEP. A helical transmembrane segment spans residues 386-406; sequence LFWPMFIIATLAAIVASQALI. The Cytoplasmic segment spans residues 407–437; the sequence is SASFSIIRQSIALGCFPRVTMKHTSGKHEGQ. Residues 438-458 traverse the membrane as a helical segment; it reads VYSPEINYFLMVACILITVGF. Residues 459 to 469 lie on the Extracellular side of the membrane; the sequence is KGGPEIGQAFG. The helical transmembrane segment at 470 to 490 threads the bilayer; it reads VAVIFVMLFTTNLMTVVMLII. Residues 491–494 lie on the Cytoplasmic side of the membrane; that stretch reads WESN. A helical transmembrane segment spans residues 495–515; it reads IALASLFFVFFFSIEGIYMTS. The Extracellular portion of the chain corresponds to 516–519; it reads LMNK. The chain crosses the membrane as a helical span at residues 520–540; it reads ILQGGWVPFAITAFFLIITLS. The Cytoplasmic portion of the chain corresponds to 541–739; it reads WTYGRSKKGE…TLQVGMLYEI (199 aa).

Belongs to the HAK/KUP transporter (TC 2.A.72.3) family.

The protein localises to the membrane. High-affinity potassium transporter. The sequence is that of Potassium transporter 26 (HAK26) from Oryza sativa subsp. japonica (Rice).